The following is a 558-amino-acid chain: ATP synthase subunit alpha (558 aa).

172–179 (GDRKTGKT) contacts ATP. Residues 536-558 (ESVKVHQAIPAKTSEKSKNSTPR) form a disordered region. Basic and acidic residues predominate over residues 548 to 558 (TSEKSKNSTPR).

This sequence belongs to the ATPase alpha/beta chains family. As to quaternary structure, F-type ATPases have 2 components, CF(1) - the catalytic core - and CF(0) - the membrane proton channel. CF(1) has five subunits: alpha(3), beta(3), gamma(1), delta(1), epsilon(1). CF(0) has three main subunits: a(1), b(2) and c(9-12). The alpha and beta chains form an alternating ring which encloses part of the gamma chain. CF(1) is attached to CF(0) by a central stalk formed by the gamma and epsilon chains, while a peripheral stalk is formed by the delta and b chains.

It is found in the cell membrane. It carries out the reaction ATP + H2O + 4 H(+)(in) = ADP + phosphate + 5 H(+)(out). Produces ATP from ADP in the presence of a proton gradient across the membrane. The alpha chain is a regulatory subunit. This Mycobacterium leprae (strain Br4923) protein is ATP synthase subunit alpha.